The following is a 943-amino-acid chain: Isoleucine--tRNA ligase (943 aa).

The short motif at 58–68 (PYANGKIHIGH) is the 'HIGH' region element. Glu567 contacts L-isoleucyl-5'-AMP. The 'KMSKS' region motif lies at 608-612 (KMSKS). Lys611 provides a ligand contact to ATP. Positions 906, 909, 926, and 929 each coordinate Zn(2+).

The protein belongs to the class-I aminoacyl-tRNA synthetase family. IleS type 1 subfamily. Monomer. Zn(2+) is required as a cofactor.

The protein localises to the cytoplasm. The enzyme catalyses tRNA(Ile) + L-isoleucine + ATP = L-isoleucyl-tRNA(Ile) + AMP + diphosphate. Its function is as follows. Catalyzes the attachment of isoleucine to tRNA(Ile). As IleRS can inadvertently accommodate and process structurally similar amino acids such as valine, to avoid such errors it has two additional distinct tRNA(Ile)-dependent editing activities. One activity is designated as 'pretransfer' editing and involves the hydrolysis of activated Val-AMP. The other activity is designated 'posttransfer' editing and involves deacylation of mischarged Val-tRNA(Ile). The sequence is that of Isoleucine--tRNA ligase from Pseudomonas putida (strain ATCC 47054 / DSM 6125 / CFBP 8728 / NCIMB 11950 / KT2440).